The chain runs to 432 residues: Neuronal pentraxin-1 (432 aa).

The signal sequence occupies residues 1 to 22 (MLAGRAARTCALLALCLLGSRA). The interval 90 to 128 (ESQSTLDAGPGEARSGGGRKQPGSGKNTMGDLSRTPASE) is disordered. Residues Asn154 and Asn193 are each glycosylated (N-linked (GlcNAc...) asparagine). Residues 226–428 (DKFQLTFPLR…GATKWTFEAC (203 aa)) form the Pentraxin (PTX) domain. The cysteines at positions 256 and 316 are disulfide-linked. Residues Asn280, Glu358, Gln359, Asp360, and Gln370 each contribute to the Ca(2+) site.

Homooligomer or heterooligomer (probably pentamer) with neuronal pentraxin receptor (NPTXR). Ca(2+) is required as a cofactor. Glycosylated. As to expression, cerebellum, hippocampus and cerebral cortex.

It is found in the secreted. It localises to the cytoplasmic vesicle. The protein localises to the secretory vesicle. The protein resides in the endoplasmic reticulum. May be involved in mediating uptake of synaptic material during synapse remodeling or in mediating the synaptic clustering of AMPA glutamate receptors at a subset of excitatory synapses. The protein is Neuronal pentraxin-1 (Nptx1) of Rattus norvegicus (Rat).